Here is a 364-residue protein sequence, read N- to C-terminus: Spermidine/putrescine import ATP-binding protein PotA (364 aa).

Residues 5–235 (LSLKSVSKSY…PVNRFVADFI (231 aa)) enclose the ABC transporter domain. ATP is bound at residue 37 to 44 (GPSGCGKT).

This sequence belongs to the ABC transporter superfamily. Spermidine/putrescine importer (TC 3.A.1.11.1) family. The complex is composed of two ATP-binding proteins (PotA), two transmembrane proteins (PotB and PotC) and a solute-binding protein (PotD).

Its subcellular location is the cell membrane. It catalyses the reaction ATP + H2O + polyamine-[polyamine-binding protein]Side 1 = ADP + phosphate + polyamineSide 2 + [polyamine-binding protein]Side 1.. Part of the ABC transporter complex PotABCD involved in spermidine/putrescine import. Responsible for energy coupling to the transport system. The polypeptide is Spermidine/putrescine import ATP-binding protein PotA (Staphylococcus aureus (strain USA300)).